The chain runs to 321 residues: Manganese-dependent ADP-ribose/CDP-alcohol diphosphatase (321 aa).

Zn(2+) contacts are provided by Asp25, Gln27, Asp72, Asn107, His226, His263, and His265.

Belongs to the ADPRibase-Mn family. In terms of assembly, monomer. It depends on Mg(2+) as a cofactor.

It carries out the reaction CDP-choline + H2O = phosphocholine + CMP + 2 H(+). It catalyses the reaction ADP-D-ribose + H2O = D-ribose 5-phosphate + AMP + 2 H(+). The catalysed reaction is CDP-glycerol + H2O = sn-glycerol 3-phosphate + CMP + 2 H(+). Hydrolyzes ADP-ribose, IDP-ribose, CDP-glycerol, CDP-choline and CDP-ethanolamine, but not other non-reducing ADP-sugars or CDP-glucose. The polypeptide is Manganese-dependent ADP-ribose/CDP-alcohol diphosphatase (Oryza sativa subsp. japonica (Rice)).